The chain runs to 594 residues: Suppressor of hairless protein (594 aa).

A disordered region spans residues 20 to 87; that stretch reads ETTVVNPNGS…QQQQQHQQQM (68 aa). A compositionally biased stretch (low complexity) spans 58–87; that stretch reads QQQQQQLQVHHQQQQQQQQQQQQQQHQQQM. 3 DNA-binding regions span residues 131 to 141, 239 to 244, and 266 to 271; these read QKSYGNEKRFF, SKPSKK, and RLRSQT. The region spanning 429 to 519 is the IPT/TIG domain; it reads PIVNSLNLNG…YATGLTFTYT (91 aa). Low complexity-rich tracts occupy residues 542–562 and 569–580; these read NNNNNITSISNNNNSNNAGSP and QQQQQQHQALPS. Residues 542-594 are disordered; sequence NNNNNITSISNNNNSNNAGSPAAGGGLQQQQQQHQALPSISEVQWNSHGSGLS. The span at 582–594 shows a compositional bias: polar residues; that stretch reads SEVQWNSHGSGLS.

The protein belongs to the Su(H) family. Interacts with activated cleaved Notch. Interacts with Hairless, this interaction preventing its DNA-binding activity. Interacts with insv (via BEN domain).

It is found in the nucleus. It localises to the cytoplasm. Functionally, transcriptional regulator that plays a central role in Notch signaling, a signaling pathway involved in cell-cell communication that regulates a broad spectrum of cell-fate determinations. Binds directly the 5'-GTGRGAR-3' DNA consensus sequence, which is present in the regulatory region of several genes. Acts as a transcriptional repressor when it is not associated with Notch proteins. When associated with some Notch protein, it acts as a transcriptional activator that activates transcription of Notch target genes. Required for transcription of Sim. Specifically binds to the immunoglobulin kappa-type J segment recombination signal sequence. Required for neurogenesis in imaginal disks. In the larval brain, might play a role as a transducer of Notch signaling during type II neuroblast development. Also functions independently of the Notch pathway, in the development of the bristle sensory organ precursor cell. In Drosophila melanogaster (Fruit fly), this protein is Suppressor of hairless protein (Su(H)).